Consider the following 530-residue polypeptide: uncharacterized protein (530 aa).

It belongs to the mimivirus R640 family.

This is an uncharacterized protein from Acanthamoeba polyphaga (Amoeba).